The chain runs to 631 residues: 1-deoxy-D-xylulose-5-phosphate synthase (631 aa).

Thiamine diphosphate is bound by residues H87 and 128-130 (GHS). D159 is a binding site for Mg(2+). Residues 160–161 (GA), N188, F295, and E377 each bind thiamine diphosphate. N188 lines the Mg(2+) pocket.

Belongs to the transketolase family. DXPS subfamily. As to quaternary structure, homodimer. Requires Mg(2+) as cofactor. The cofactor is thiamine diphosphate.

The enzyme catalyses D-glyceraldehyde 3-phosphate + pyruvate + H(+) = 1-deoxy-D-xylulose 5-phosphate + CO2. It participates in metabolic intermediate biosynthesis; 1-deoxy-D-xylulose 5-phosphate biosynthesis; 1-deoxy-D-xylulose 5-phosphate from D-glyceraldehyde 3-phosphate and pyruvate: step 1/1. Catalyzes the acyloin condensation reaction between C atoms 2 and 3 of pyruvate and glyceraldehyde 3-phosphate to yield 1-deoxy-D-xylulose-5-phosphate (DXP). The sequence is that of 1-deoxy-D-xylulose-5-phosphate synthase from Pseudomonas putida (strain ATCC 700007 / DSM 6899 / JCM 31910 / BCRC 17059 / LMG 24140 / F1).